We begin with the raw amino-acid sequence, 90 residues long: Acylphosphatase (90 aa).

The region spanning 5-90 (CERFIVKGHV…YKPFRGFKIL (86 aa)) is the Acylphosphatase-like domain. Catalysis depends on residues R20 and N38.

This sequence belongs to the acylphosphatase family.

It catalyses the reaction an acyl phosphate + H2O = a carboxylate + phosphate + H(+). In Vibrio parahaemolyticus serotype O3:K6 (strain RIMD 2210633), this protein is Acylphosphatase (acyP).